The following is a 44-amino-acid chain: Peptide Hact-4 (44 aa).

Disulfide bonds link Cys8–Cys42, Cys15–Cys34, and Cys20–Cys43.

In terms of tissue distribution, expressed in tentacles.

It is found in the nematocyst. The protein localises to the secreted. In terms of biological role, peptide with unknown function. Does not exhibit antimicrobial activity against Escherichia coli and Staphylococcus aureus. Does not exhibit any effect on human ion channel TRPV1 in a Xenopus laevis oocytes assay. The polypeptide is Peptide Hact-4 (Heliofungia actiniformis (Mushroom coral)).